A 134-amino-acid chain; its full sequence is Large ribosomal subunit protein eL32 (134 aa).

The protein belongs to the eukaryotic ribosomal protein eL32 family.

The sequence is that of Large ribosomal subunit protein eL32 (RpL32) from Drosophila melanogaster (Fruit fly).